The sequence spans 63 residues: Small ribosomal subunit protein bS21 (63 aa).

It belongs to the bacterial ribosomal protein bS21 family.

The chain is Small ribosomal subunit protein bS21 from Phocaeicola vulgatus (strain ATCC 8482 / DSM 1447 / JCM 5826 / CCUG 4940 / NBRC 14291 / NCTC 11154) (Bacteroides vulgatus).